Here is a 591-residue protein sequence, read N- to C-terminus: Asparagine synthetase [glutamine-hydrolyzing] 2 (591 aa).

The active-site For GATase activity is C2. The Glutamine amidotransferase type-2 domain occupies 2–185 (CGILAVLGVA…PGHLYSSKTG (184 aa)). Residues 50 to 54 (RLAIV), 75 to 77 (NGE), and D98 contribute to the L-glutamine site. The 324-residue stretch at 193-516 (PPWFSESIPS…PKNAARLTVP (324 aa)) folds into the Asparagine synthetase domain. ATP contacts are provided by residues L231, I267, and 341 to 342 (SG).

In terms of tissue distribution, expressed in companion cells of leaf sheath vascular bundles, and phloem-parenchyma cells, nucellar projections and nucellar epidermis of dorsal vascular bundles of grains.

It catalyses the reaction L-aspartate + L-glutamine + ATP + H2O = L-asparagine + L-glutamate + AMP + diphosphate + H(+). The protein operates within amino-acid biosynthesis; L-asparagine biosynthesis; L-asparagine from L-aspartate (L-Gln route): step 1/1. Essential for nitrogen assimilation, distribution and remobilization within the plant via the phloem. This is Asparagine synthetase [glutamine-hydrolyzing] 2 from Oryza sativa subsp. japonica (Rice).